The following is a 174-amino-acid chain: MGSVGVLIGQGFDAHRFAPAGSGRELWIAGLYWPVPDSCSEADAAKYEGIEGDSDGDVAAHALIDALLAAARLGDIGSLFGVGADAHGAGMHGIDMLQEVVAHLASNGYTPASASVAIIGNRPKIGTRRAEAEAALSAAVGCPVSVTATTTDHMGFTGHGEGIAAIANALVEKI.

Positions 13, 15, and 61 each coordinate a divalent metal cation. Position 13–15 (Asp13–His15) interacts with 4-CDP-2-C-methyl-D-erythritol 2-phosphate. 4-CDP-2-C-methyl-D-erythritol 2-phosphate-binding positions include Asp75–Gly77, Thr149–Asp152, Phe156, and His159.

This sequence belongs to the IspF family. As to quaternary structure, homotrimer. A divalent metal cation serves as cofactor.

It carries out the reaction 4-CDP-2-C-methyl-D-erythritol 2-phosphate = 2-C-methyl-D-erythritol 2,4-cyclic diphosphate + CMP. It functions in the pathway isoprenoid biosynthesis; isopentenyl diphosphate biosynthesis via DXP pathway; isopentenyl diphosphate from 1-deoxy-D-xylulose 5-phosphate: step 4/6. Functionally, involved in the biosynthesis of isopentenyl diphosphate (IPP) and dimethylallyl diphosphate (DMAPP), two major building blocks of isoprenoid compounds. Catalyzes the conversion of 4-diphosphocytidyl-2-C-methyl-D-erythritol 2-phosphate (CDP-ME2P) to 2-C-methyl-D-erythritol 2,4-cyclodiphosphate (ME-CPP) with a corresponding release of cytidine 5-monophosphate (CMP). In Bifidobacterium longum (strain NCC 2705), this protein is 2-C-methyl-D-erythritol 2,4-cyclodiphosphate synthase.